Here is a 78-residue protein sequence, read N- to C-terminus: Large ribosomal subunit protein bL28 (78 aa).

The disordered stretch occupies residues 1–20; that stretch reads MSRVCQVTGKRPAVGNNRSH.

It belongs to the bacterial ribosomal protein bL28 family.

The protein is Large ribosomal subunit protein bL28 of Actinobacillus pleuropneumoniae serotype 7 (strain AP76).